A 94-amino-acid polypeptide reads, in one-letter code: DNA-directed RNA polymerase subunit omega (94 aa).

This sequence belongs to the RNA polymerase subunit omega family. As to quaternary structure, the RNAP catalytic core consists of 2 alpha, 1 beta, 1 beta' and 1 omega subunit. When a sigma factor is associated with the core the holoenzyme is formed, which can initiate transcription.

It catalyses the reaction RNA(n) + a ribonucleoside 5'-triphosphate = RNA(n+1) + diphosphate. Functionally, promotes RNA polymerase assembly. Latches the N- and C-terminal regions of the beta' subunit thereby facilitating its interaction with the beta and alpha subunits. In Tolumonas auensis (strain DSM 9187 / NBRC 110442 / TA 4), this protein is DNA-directed RNA polymerase subunit omega.